A 533-amino-acid chain; its full sequence is Atypical kinase COQ8B, mitochondrial (533 aa).

The helical transmembrane segment at 93 to 109 (LASFGGLAVGLGLGALA) threads the bilayer. The KxGQ motif motif lies at 156 to 159 (KIGQ). The Protein kinase domain maps to 192 to 424 (MMRVLEEELG…DRVLQKSQDL (233 aa)). An AAAS motif motif is present at residues 217–220 (AAAS). ATP-binding positions include Ser220, Lys238, and 325 to 328 (MELA). Asp368 acts as the Proton acceptor in catalysis. Residues Asn373 and Asp387 each contribute to the ATP site.

The protein belongs to the protein kinase superfamily. ADCK protein kinase family. Homodimer; homodimerizes via its transmembrane region. Interacts with COQ6 and COQ7. Interacts with the multi-subunit COQ enzyme complex, composed of at least COQ3, COQ4, COQ5, COQ6, COQ7 and COQ9.

The protein localises to the mitochondrion membrane. The protein resides in the cytoplasm. It localises to the cytosol. It is found in the cell membrane. The protein operates within cofactor biosynthesis; ubiquinone biosynthesis. In terms of biological role, atypical kinase involved in the biosynthesis of coenzyme Q, also named ubiquinone, an essential lipid-soluble electron transporter for aerobic cellular respiration. Its substrate specificity is still unclear: may act as a protein kinase that mediates phosphorylation of COQ3. According to other reports, acts as a small molecule kinase, possibly a lipid kinase that phosphorylates a prenyl lipid in the ubiquinone biosynthesis pathway, as suggested by its ability to bind coenzyme Q lipid intermediates. However, the small molecule kinase activity was not confirmed by another publication. Required for podocyte migration. The sequence is that of Atypical kinase COQ8B, mitochondrial from Mus musculus (Mouse).